Consider the following 381-residue polypeptide: E3 ubiquitin-protein ligase RNF13 (381 aa).

The first 34 residues, 1–34, serve as a signal peptide directing secretion; that stretch reads MLLSIGMLMLSATQIYTIVTVQLFAFLNLLPVEA. Topologically, residues 35–182 are lumenal; it reads DILAYNFENG…IPEFSLPLEY (148 aa). Residues 64-160 enclose the PA domain; the sequence is LKGFLINSKP…GEASANSLKE (97 aa). N-linked (GlcNAc...) asparagine glycosylation occurs at Asn88. A helical membrane pass occupies residues 183–203; the sequence is YLIPFLIIVGICLILIVIFMI. Topologically, residues 204 to 381 are cytoplasmic; it reads TKFVQDRHRA…ERDYRVTNTV (178 aa). An RING-type; atypical zinc finger spans residues 240-282; the sequence is CAICLDEYEDGDKLRILPCSHAYHCKCVDPWLTKTKKTCPVCK. The segment at 285–381 is disordered; it reads VVPSQGDSDS…ERDYRVTNTV (97 aa). 2 stretches are compositionally biased toward acidic residues: residues 292–305 and 339–353; these read SDSETDSSQEENEV and SEYEEDDNDNIDSSD. Basic and acidic residues predominate over residues 370-381; the sequence is NDERDYRVTNTV.

As to expression, widely expressed (at protein level). Lowest levels in the liver, moderate levels in the heart, intestine and spleen, and high levels in skeletal muscle, kidney, proventriculus and brain. Also expressed in inner ear after noise exposure.

Its subcellular location is the endoplasmic reticulum membrane. It localises to the late endosome membrane. The protein resides in the lysosome membrane. The protein localises to the nucleus inner membrane. It carries out the reaction S-ubiquitinyl-[E2 ubiquitin-conjugating enzyme]-L-cysteine + [acceptor protein]-L-lysine = [E2 ubiquitin-conjugating enzyme]-L-cysteine + N(6)-ubiquitinyl-[acceptor protein]-L-lysine.. The protein operates within protein modification; protein ubiquitination. E3 ubiquitin-protein ligase that regulates cell proliferation. Involved in apoptosis regulation. Mediates ER stress-induced activation of JNK signaling pathway and apoptosis by promoting ERN1 activation and splicing of XBP1 mRNA. The sequence is that of E3 ubiquitin-protein ligase RNF13 from Gallus gallus (Chicken).